The following is a 2512-amino-acid chain: Isonitrile lipopeptide synthase (2512 aa).

Carrier domains follow at residues 935 to 1003 and 1984 to 2059; these read AAGL…PTPD and APAG…GRDA. Residues Ser963 and Ser2019 each carry the O-(pantetheine 4'-phosphoryl)serine modification. Residues 2112 to 2372 form the Thioester reductase (TE) domain; it reads LTGATGFLGR…LPVTFVAEAI (261 aa).

The protein belongs to the ATP-dependent AMP-binding enzyme family. It depends on pantetheine 4'-phosphate as a cofactor.

It catalyses the reaction 2 a (3R)-3-isocyanyl-fatty acyl-[ACP] + L-lysine + ATP + 2 NADPH = an isonitrile lipopeptide + 2 holo-[ACP] + AMP + diphosphate + 2 NADP(+). In terms of biological role, nonribosomal peptide synthetase (NRPS) involved in the biosynthesis of a unique class of isonitrile lipopeptides (INLPs) that seem to function as virulence factors in M.tuberculosis and to play a role in metal acquisition. Catalyzes the final step in the pathway, i.e. the condensation of a (3R)-3-isocyanyl-fatty acyl-[ACP] to both amino groups of a lysine, producing isonitrile lipopeptides. The sequence is that of Isonitrile lipopeptide synthase from Mycobacterium tuberculosis (strain ATCC 25618 / H37Rv).